We begin with the raw amino-acid sequence, 518 residues long: Retinal dehydrogenase 2 (518 aa).

Tyr168 carries the phosphotyrosine modification. NAD(+) contacts are provided by residues 184 to 186, 210 to 213, and 264 to 266; these read IPW, KPAE, and STE. Glu286 acts as the Proton acceptor in catalysis. Cys320 (nucleophile) is an active-site residue. Ser351 is modified (phosphoserine). Residues 366-370 and Glu417 each bind NAD(+); that span reads KQYNK.

The protein belongs to the aldehyde dehydrogenase family. As to quaternary structure, homotetramer.

It localises to the cytoplasm. It catalyses the reaction retinal + NAD(+) + H2O = retinoate + NADH + 2 H(+). The catalysed reaction is all-trans-retinal + NAD(+) + H2O = all-trans-retinoate + NADH + 2 H(+). It carries out the reaction all-trans-13,14-dihydroretinal + NAD(+) + H2O = all-trans-13,14-dihydroretinoate + NADH + 2 H(+). Its pathway is cofactor metabolism; retinol metabolism. Its function is as follows. Catalyzes the NAD-dependent oxidation of aldehyde substrates, such as all-trans-retinal and all-trans-13,14-dihydroretinal, to their corresponding carboxylic acids, all-trans-retinoate and all-trans-13,14-dihydroretinoate, respectively. Retinoate signaling is critical for the transcriptional control of many genes, for instance it is crucial for initiation of meiosis in both male and female. Recognizes retinal as substrate, both in its free form and when bound to cellular retinol-binding protein. Lacks activity with benzaldehyde, acetaldehyde and octanal. Displays complete lack of activity with citral. The polypeptide is Retinal dehydrogenase 2 (Aldh1a2) (Mus musculus (Mouse)).